The following is a 232-amino-acid chain: Alpha N-terminal protein methyltransferase 1 (232 aa).

S-adenosyl-L-methionine is bound by residues G71, R76, 123–124 (MQ), and Q139.

Belongs to the methyltransferase superfamily. NTM1 family.

The protein localises to the cytoplasm. It carries out the reaction N-terminal L-alanyl-L-prolyl-L-lysyl-[protein] + 3 S-adenosyl-L-methionine = N-terminal N,N,N-trimethyl-L-alanyl-L-prolyl-L-lysyl-[protein] + 3 S-adenosyl-L-homocysteine + 3 H(+). The enzyme catalyses N-terminal L-seryl-L-prolyl-L-lysyl-[protein] + 3 S-adenosyl-L-methionine = N-terminal N,N,N-trimethyl-L-seryl-L-prolyl-L-lysyl-[protein] + 3 S-adenosyl-L-homocysteine + 3 H(+). It catalyses the reaction N-terminal L-prolyl-L-prolyl-L-lysyl-[protein] + 2 S-adenosyl-L-methionine = N-terminal N,N-dimethyl-L-prolyl-L-prolyl-L-lysyl-[protein] + 2 S-adenosyl-L-homocysteine + 2 H(+). Functionally, alpha-N-methyltransferase that methylates the N-terminus of target proteins containing the N-terminal motif [Ala/Pro/Ser]-Pro-Lys when the initiator Met is cleaved. Specifically catalyzes mono-, di- or tri-methylation of exposed alpha-amino group of Ala or Ser residue in the [Ala/Ser]-Pro-Lys motif and mono- or di-methylation of Pro in the Pro-Pro-Lys motif. Responsible for the N-terminal methylation of the ribosomal proteins RPL12A, RPL12B, RPS25A and RPS25B. In Saccharomyces cerevisiae (strain ATCC 204508 / S288c) (Baker's yeast), this protein is Alpha N-terminal protein methyltransferase 1 (TAE1).